Reading from the N-terminus, the 376-residue chain is Branched-chain-amino-acid aminotransferase, cytosolic (376 aa).

Position 202 is an N6-(pyridoxal phosphate)lysine (Lys202).

This sequence belongs to the class-IV pyridoxal-phosphate-dependent aminotransferase family. Pyridoxal 5'-phosphate serves as cofactor.

The protein resides in the cytoplasm. The enzyme catalyses L-leucine + 2-oxoglutarate = 4-methyl-2-oxopentanoate + L-glutamate. It catalyses the reaction L-isoleucine + 2-oxoglutarate = (S)-3-methyl-2-oxopentanoate + L-glutamate. The catalysed reaction is L-valine + 2-oxoglutarate = 3-methyl-2-oxobutanoate + L-glutamate. It carries out the reaction a 2-oxocarboxylate + L-methionine = 4-methylsulfanyl-2-oxobutanoate + an L-alpha-amino acid. Its pathway is amino-acid biosynthesis; L-isoleucine biosynthesis; L-isoleucine from 2-oxobutanoate: step 4/4. It functions in the pathway amino-acid biosynthesis; L-leucine biosynthesis; L-leucine from 3-methyl-2-oxobutanoate: step 4/4. It participates in amino-acid biosynthesis; L-valine biosynthesis; L-valine from pyruvate: step 4/4. The protein operates within amino-acid biosynthesis; L-methionine biosynthesis via salvage pathway; L-methionine from S-methyl-5-thio-alpha-D-ribose 1-phosphate: step 6/6. Its function is as follows. Cytoplasmic isozyme of branched-chain-amino-acid aminotransferase, which catalyzes the first reaction in the catabolism of the essential branched chain amino acids (BCAAs) leucine, isoleucine, and valine. Catalyzes the formation of methionine from 2-keto-4-methylthiobutyrate (KMTB) in the methionine salvage pathway primarily using BCAAs (leucine, isoleucine, and valine) as well as lysine and proline as the amino donors. Involved in cell cycle regulation. The sequence is that of Branched-chain-amino-acid aminotransferase, cytosolic from Saccharomyces cerevisiae (strain ATCC 204508 / S288c) (Baker's yeast).